Here is a 96-residue protein sequence, read N- to C-terminus: Transcription and mRNA export factor SUS1 (96 aa).

Lys68 is covalently cross-linked (Glycyl lysine isopeptide (Lys-Gly) (interchain with G-Cter in ubiquitin)).

It belongs to the ENY2 family. Component of the nuclear pore complex (NPC)-associated TREX-2 complex (transcription and export complex 2), composed of at least SUS1, SAC3, THP1, SEM1, and CDC31. TREX-2 contains 2 SUS1 chains. The TREX-2 complex interacts with the nucleoporin NUP1. Component of the 1.8 MDa SAGA transcription coactivator-HAT complex. SAGA is built of 5 distinct domains with specialized functions. Within the SAGA complex, SUS1, SGF11, SGF73 and UBP8 form an additional subcomplex of SAGA called the DUB module (deubiquitination module). Interacts directly with THP1, SAC3, SGF11, and with the RNA polymerase II.

It localises to the nucleus. The protein resides in the nucleoplasm. The protein localises to the cytoplasm. It is found in the P-body. Involved in mRNA export coupled transcription activation by association with both the TREX-2 and the SAGA complexes. At the promoters, SAGA is required for recruitment of the basal transcription machinery. It influences RNA polymerase II transcriptional activity through different activities such as TBP interaction and promoter selectivity, interaction with transcription activators, and chromatin modification through histone acetylation and deubiquitination. Within the SAGA complex, participates in a subcomplex required for deubiquitination of H2B and for the maintenance of steady-state H3 methylation levels. The TREX-2 complex functions in docking export-competent ribonucleoprotein particles (mRNPs) to the nuclear entrance of the nuclear pore complex (nuclear basket). TREX-2 participates in mRNA export and accurate chromatin positioning in the nucleus by tethering genes to the nuclear periphery. May also be involved in cytoplasmic mRNA decay by interaction with components of P-bodies. This Saccharomyces cerevisiae (strain YJM789) (Baker's yeast) protein is Transcription and mRNA export factor SUS1.